The sequence spans 119 residues: Holo-[acyl-carrier-protein] synthase (119 aa).

The Mg(2+) site is built by aspartate 5 and glutamate 51.

This sequence belongs to the P-Pant transferase superfamily. AcpS family. Mg(2+) is required as a cofactor.

It is found in the cytoplasm. It carries out the reaction apo-[ACP] + CoA = holo-[ACP] + adenosine 3',5'-bisphosphate + H(+). Transfers the 4'-phosphopantetheine moiety from coenzyme A to a Ser of acyl-carrier-protein. This is Holo-[acyl-carrier-protein] synthase from Helicobacter pylori (strain ATCC 700392 / 26695) (Campylobacter pylori).